A 459-amino-acid chain; its full sequence is Beta-glucosidase (459 aa).

The active-site Proton donor is Glu-171. The Nucleophile role is filled by Glu-359.

This sequence belongs to the glycosyl hydrolase 1 family.

It catalyses the reaction Hydrolysis of terminal, non-reducing beta-D-glucosyl residues with release of beta-D-glucose.. The protein is Beta-glucosidase (abg) of Agrobacterium sp. (strain ATCC 21400).